Reading from the N-terminus, the 261-residue chain is Indole-3-glycerol phosphate synthase (261 aa).

This sequence belongs to the TrpC family.

The catalysed reaction is 1-(2-carboxyphenylamino)-1-deoxy-D-ribulose 5-phosphate + H(+) = (1S,2R)-1-C-(indol-3-yl)glycerol 3-phosphate + CO2 + H2O. Its pathway is amino-acid biosynthesis; L-tryptophan biosynthesis; L-tryptophan from chorismate: step 4/5. This chain is Indole-3-glycerol phosphate synthase, found in Burkholderia lata (strain ATCC 17760 / DSM 23089 / LMG 22485 / NCIMB 9086 / R18194 / 383).